The primary structure comprises 220 residues: Pyridoxine/pyridoxamine 5'-phosphate oxidase (220 aa).

Residues 49-54 (RMVLLK), 68-69 (YT), Lys75, and Gln97 each bind FMN. Lys54 is a substrate binding site. Substrate-binding residues include Tyr115, Arg119, and Ser123. Residues 132 to 133 (QS) and Trp176 contribute to the FMN site. Residue 182–184 (RLH) coordinates substrate. Position 186 (Arg186) interacts with FMN.

This sequence belongs to the pyridoxamine 5'-phosphate oxidase family. Homodimer. The cofactor is FMN.

It carries out the reaction pyridoxamine 5'-phosphate + O2 + H2O = pyridoxal 5'-phosphate + H2O2 + NH4(+). The enzyme catalyses pyridoxine 5'-phosphate + O2 = pyridoxal 5'-phosphate + H2O2. Its pathway is cofactor metabolism; pyridoxal 5'-phosphate salvage; pyridoxal 5'-phosphate from pyridoxamine 5'-phosphate: step 1/1. It participates in cofactor metabolism; pyridoxal 5'-phosphate salvage; pyridoxal 5'-phosphate from pyridoxine 5'-phosphate: step 1/1. Catalyzes the oxidation of either pyridoxine 5'-phosphate (PNP) or pyridoxamine 5'-phosphate (PMP) into pyridoxal 5'-phosphate (PLP). The chain is Pyridoxine/pyridoxamine 5'-phosphate oxidase from Paracoccus denitrificans (strain Pd 1222).